A 212-amino-acid polypeptide reads, in one-letter code: uncharacterized protein (212 aa).

Residue C52 is the Acyl-thioester intermediate of the active site. Catalysis depends on residues H89 and D104.

Belongs to the arylamine N-acetyltransferase family.

This is an uncharacterized protein from Acanthamoeba polyphaga (Amoeba).